The primary structure comprises 586 residues: Phosphomethylpyrimidine synthase (586 aa).

The disordered stretch occupies residues 1 to 59 (MKQSVSAEQIELKSSLPGSKKVYVDGPREGMKVPMREIEQSDTNGVPNPPIRVYDTSGP). A compositionally biased stretch (basic and acidic residues) spans 22–39 (VYVDGPREGMKVPMREIE). Residues Asn193, Met222, Tyr251, His287, 307–309 (SRG), 348–351 (DGLR), and Glu387 contribute to the substrate site. Residue His391 coordinates Zn(2+). Position 414 (Tyr414) interacts with substrate. His455 contributes to the Zn(2+) binding site. Positions 535, 538, and 543 each coordinate [4Fe-4S] cluster.

Belongs to the ThiC family. It depends on [4Fe-4S] cluster as a cofactor.

The catalysed reaction is 5-amino-1-(5-phospho-beta-D-ribosyl)imidazole + S-adenosyl-L-methionine = 4-amino-2-methyl-5-(phosphooxymethyl)pyrimidine + CO + 5'-deoxyadenosine + formate + L-methionine + 3 H(+). It participates in cofactor biosynthesis; thiamine diphosphate biosynthesis. Its function is as follows. Catalyzes the synthesis of the hydroxymethylpyrimidine phosphate (HMP-P) moiety of thiamine from aminoimidazole ribotide (AIR) in a radical S-adenosyl-L-methionine (SAM)-dependent reaction. This chain is Phosphomethylpyrimidine synthase, found in Bacillus cereus (strain ZK / E33L).